The chain runs to 447 residues: Cysteine--tRNA ligase (447 aa).

Zn(2+) is bound at residue C28. Residues 30 to 40 carry the 'HIGH' region motif; the sequence is PTVYNYIHIGN. The Zn(2+) site is built by C211, H236, and E240. The short motif at 268–272 is the 'KMSKS' region element; it reads KMSKS. ATP is bound at residue K271.

It belongs to the class-I aminoacyl-tRNA synthetase family. Monomer. Requires Zn(2+) as cofactor.

Its subcellular location is the cytoplasm. It catalyses the reaction tRNA(Cys) + L-cysteine + ATP = L-cysteinyl-tRNA(Cys) + AMP + diphosphate. This chain is Cysteine--tRNA ligase, found in Streptococcus pyogenes serotype M6 (strain ATCC BAA-946 / MGAS10394).